A 247-amino-acid chain; its full sequence is 23S rRNA (guanosine-2'-O-)-methyltransferase RlmB (247 aa).

Residues G197, I217, and L226 each coordinate S-adenosyl-L-methionine.

This sequence belongs to the class IV-like SAM-binding methyltransferase superfamily. RNA methyltransferase TrmH family. RlmB subfamily.

The protein localises to the cytoplasm. The enzyme catalyses guanosine(2251) in 23S rRNA + S-adenosyl-L-methionine = 2'-O-methylguanosine(2251) in 23S rRNA + S-adenosyl-L-homocysteine + H(+). In terms of biological role, specifically methylates the ribose of guanosine 2251 in 23S rRNA. The sequence is that of 23S rRNA (guanosine-2'-O-)-methyltransferase RlmB from Vibrio parahaemolyticus serotype O3:K6 (strain RIMD 2210633).